Consider the following 200-residue polypeptide: ATP-dependent Clp protease proteolytic subunit (200 aa).

Serine 104 acts as the Nucleophile in catalysis. Histidine 129 is an active-site residue.

Belongs to the peptidase S14 family. Fourteen ClpP subunits assemble into 2 heptameric rings which stack back to back to give a disk-like structure with a central cavity, resembling the structure of eukaryotic proteasomes.

It localises to the cytoplasm. It carries out the reaction Hydrolysis of proteins to small peptides in the presence of ATP and magnesium. alpha-casein is the usual test substrate. In the absence of ATP, only oligopeptides shorter than five residues are hydrolyzed (such as succinyl-Leu-Tyr-|-NHMec, and Leu-Tyr-Leu-|-Tyr-Trp, in which cleavage of the -Tyr-|-Leu- and -Tyr-|-Trp bonds also occurs).. In terms of biological role, cleaves peptides in various proteins in a process that requires ATP hydrolysis. Has a chymotrypsin-like activity. Plays a major role in the degradation of misfolded proteins. The protein is ATP-dependent Clp protease proteolytic subunit of Rubrobacter xylanophilus (strain DSM 9941 / JCM 11954 / NBRC 16129 / PRD-1).